A 23-amino-acid polypeptide reads, in one-letter code: Lycosin-II (23 aa).

Leucine 21 carries the post-translational modification Leucine amide.

In terms of tissue distribution, expressed by the venom gland.

Its subcellular location is the secreted. It is found in the target cell membrane. Its function is as follows. Has strong antibacterial activity and biofilm inhibition effects against Gram-positive and -negative bacteria including E.coli, S.epidermidis, and A.baumannii and oxacillin-resistant S.aureus and meropenem-resistant P.aeruginosa. Is not cytotoxic against human foreskin fibroblast Hs27 or hemolytic against mammalian red blood cells. Its mechanism of action involves binding to lipoteichoic acid and lipopolysaccharide of Gram-positive and Gram-negative bacterial membranes, respectively, to destroy the bacterial membrane. In addition, it shows anti-inflammatory effects by inhibiting the expression of pro-inflammatory cytokines that are increased during bacterial infection in Hs27 cells. The protein is Lycosin-II of Lycosa singoriensis (Wolf spider).